Reading from the N-terminus, the 252-residue chain is Flap endonuclease Xni (252 aa).

D105 contacts Mg(2+). The 5'-3' exonuclease domain occupies 162 to 251 (EQYQFLDFIA…EINLKQFRVK (90 aa)). 5 residues coordinate K(+): L172, A173, P181, I183, and I186. Residues 185–190 (GIGPKS) are interaction with DNA.

The protein belongs to the Xni family. Mg(2+) serves as cofactor. It depends on K(+) as a cofactor.

Its function is as follows. Has flap endonuclease activity. During DNA replication, flap endonucleases cleave the 5'-overhanging flap structure that is generated by displacement synthesis when DNA polymerase encounters the 5'-end of a downstream Okazaki fragment. The chain is Flap endonuclease Xni from Shewanella denitrificans (strain OS217 / ATCC BAA-1090 / DSM 15013).